Here is a 274-residue protein sequence, read N- to C-terminus: Protein LNK4 (274 aa).

Positions 209-249 (NSQQKSDSNSDEFLEDRTRETEFETKLNRQSRGQSHIQQDG) are disordered. Residues 223 to 235 (EDRTRETEFETKL) show a composition bias toward basic and acidic residues. Over residues 236–249 (NRQSRGQSHIQQDG) the composition is skewed to polar residues.

In terms of assembly, interacts with REV8.

Probable transcriptional coactivator. The polypeptide is Protein LNK4 (Arabidopsis thaliana (Mouse-ear cress)).